A 486-amino-acid polypeptide reads, in one-letter code: Glutamate--tRNA ligase (486 aa).

The short motif at 12–22 (PSPTGTPHVGL) is the 'HIGH' region element. The short motif at 256–260 (KLSKR) is the 'KMSKS' region element. Lys259 is a binding site for ATP.

It belongs to the class-I aminoacyl-tRNA synthetase family. Glutamate--tRNA ligase type 1 subfamily. In terms of assembly, monomer.

The protein localises to the cytoplasm. It carries out the reaction tRNA(Glu) + L-glutamate + ATP = L-glutamyl-tRNA(Glu) + AMP + diphosphate. Functionally, catalyzes the attachment of glutamate to tRNA(Glu) in a two-step reaction: glutamate is first activated by ATP to form Glu-AMP and then transferred to the acceptor end of tRNA(Glu). The protein is Glutamate--tRNA ligase of Mycolicibacterium smegmatis (strain ATCC 700084 / mc(2)155) (Mycobacterium smegmatis).